Reading from the N-terminus, the 212-residue chain is MNDSSLSPEVTADLEYGLDILELDRAYVVPLLAYLTLLIRWNRTYNLTAIRDPREMVVRHLLDSLAIQRYVTVGRLADLGSGPGLPGIPLAISCPSLQVTLVESNGKKARFLREVVRQLGLSNVGVSEVRAEALDEALMYEHLTARALDTLNGIVTVGGHLLKSEGTLLAMKGAYPHEEIAMLPPHWVVEAVHRLQVPKLTGERHLVIVRKR.

Residues Gly-80, Leu-85, 131–132 (AE), and Arg-146 contribute to the S-adenosyl-L-methionine site.

The protein belongs to the methyltransferase superfamily. RNA methyltransferase RsmG family.

The protein localises to the cytoplasm. It carries out the reaction guanosine(527) in 16S rRNA + S-adenosyl-L-methionine = N(7)-methylguanosine(527) in 16S rRNA + S-adenosyl-L-homocysteine. In terms of biological role, specifically methylates the N7 position of guanine in position 527 of 16S rRNA. This chain is Ribosomal RNA small subunit methyltransferase G, found in Xylella fastidiosa (strain M23).